A 1133-amino-acid polypeptide reads, in one-letter code: Early transcription factor large subunit homolog (1133 aa).

The Helicase ATP-binding domain maps to 52–352 (KGGRAFFPCD…PNGQPLQRQQ (301 aa)). 99 to 106 (WQTGTGKS) lines the ATP pocket. A DEAH box motif is present at residues 281–284 (DEIH). Positions 524 to 724 (MMKDILSIIR…EGDKALRKHA (201 aa)) constitute a Helicase C-terminal domain.

This sequence belongs to the DEAD box helicase family. DEAH subfamily.

It localises to the virion. It catalyses the reaction ATP + H2O = ADP + phosphate + H(+). Functionally, putative initation factor. This chain is Early transcription factor large subunit homolog, found in African swine fever virus (isolate Tick/South Africa/Pretoriuskop Pr4/1996) (ASFV).